A 422-amino-acid chain; its full sequence is UDP-N-acetylglucosamine 1-carboxyvinyltransferase (422 aa).

22–23 (KN) is a binding site for phosphoenolpyruvate. Position 95 (R95) interacts with UDP-N-acetyl-alpha-D-glucosamine. The active-site Proton donor is C119. Position 119 is a 2-(S-cysteinyl)pyruvic acid O-phosphothioketal (C119). UDP-N-acetyl-alpha-D-glucosamine contacts are provided by residues 124 to 128 (RPIDQ), D309, and V331.

It belongs to the EPSP synthase family. MurA subfamily.

It is found in the cytoplasm. It carries out the reaction phosphoenolpyruvate + UDP-N-acetyl-alpha-D-glucosamine = UDP-N-acetyl-3-O-(1-carboxyvinyl)-alpha-D-glucosamine + phosphate. It participates in cell wall biogenesis; peptidoglycan biosynthesis. Functionally, cell wall formation. Adds enolpyruvyl to UDP-N-acetylglucosamine. The sequence is that of UDP-N-acetylglucosamine 1-carboxyvinyltransferase from Anaeromyxobacter sp. (strain Fw109-5).